The chain runs to 142 residues: Large ribosomal subunit protein uL11 (142 aa).

This sequence belongs to the universal ribosomal protein uL11 family. In terms of assembly, part of the ribosomal stalk of the 50S ribosomal subunit. Interacts with L10 and the large rRNA to form the base of the stalk. L10 forms an elongated spine to which L12 dimers bind in a sequential fashion forming a multimeric L10(L12)X complex. Post-translationally, one or more lysine residues are methylated.

Forms part of the ribosomal stalk which helps the ribosome interact with GTP-bound translation factors. The protein is Large ribosomal subunit protein uL11 of Proteus mirabilis (strain HI4320).